The following is a 275-amino-acid chain: NifU-like protein 5, mitochondrial (275 aa).

The N-terminal 61 residues, 1-61 (MKGLTRLLNS…TNASRNCSRS (61 aa)), are a transit peptide targeting the mitochondrion.

It belongs to the NifU family.

Its subcellular location is the mitochondrion. Molecular scaffold for [Fe-S] cluster assembly of mitochondrial iron-sulfur proteins. The polypeptide is NifU-like protein 5, mitochondrial (NIFU5) (Arabidopsis thaliana (Mouse-ear cress)).